The following is a 116-amino-acid chain: Biogenesis of lysosome-related organelles complex 1 subunit CNL1 (116 aa).

A coiled-coil region spans residues 63–95 (DIVDVNIQSFKDILSKCEELENYFTMLDQIEMI).

This sequence belongs to the BLOC1S4 family. In terms of assembly, component of the biogenesis of lysosome-related organelles complex-1 (BLOC-1).

It is found in the cytoplasm. In terms of biological role, component of the biogenesis of lysosome-related organelles complex-1 (BLOC-1), a complex that is involved in endosomal cargo sorting. This is Biogenesis of lysosome-related organelles complex 1 subunit CNL1 (CLN1) from Vanderwaltozyma polyspora (strain ATCC 22028 / DSM 70294 / BCRC 21397 / CBS 2163 / NBRC 10782 / NRRL Y-8283 / UCD 57-17) (Kluyveromyces polysporus).